The primary structure comprises 524 residues: Beta-glucosidase 21 (524 aa).

A signal peptide spans 1-24 (MALQKFPLMGLLLLLTILVSVTTA). Gln-55 serves as a coordination point for a beta-D-glucoside. N-linked (GlcNAc...) asparagine glycosylation occurs at Asn-61. Residues His-158 and 203 to 204 (NE) each bind a beta-D-glucoside. The active-site Proton donor is the Glu-204. A disulfide bridge connects residues Cys-223 and Cys-230. A beta-D-glucoside contacts are provided by residues Tyr-346, Glu-418, Trp-468, 475 to 476 (EW), and Phe-484. Catalysis depends on Glu-418, which acts as the Nucleophile. Asn-494 is a glycosylation site (N-linked (GlcNAc...) asparagine). Residues 521–524 (RDEL) carry the Prevents secretion from ER motif.

This sequence belongs to the glycosyl hydrolase 1 family. As to quaternary structure, component of the PYK10 complex, at least composed of PYK10/BGLU23, BGLU21, BGLU22, JAL22, JAL23, PBP1/JAL30, PBP2/JAL31, JAL32, JAL33, JAL34, JAL35, GLL22 and GLL23. As to expression, expressed exclusively in roots.

The protein localises to the endoplasmic reticulum lumen. It catalyses the reaction Hydrolysis of terminal, non-reducing beta-D-glucosyl residues with release of beta-D-glucose.. Its activity is regulated as follows. Activated upon binding to PBP1 or PBP2. In terms of biological role, beta-D-glucosidase active on scopolin &gt;&gt; esculin &gt;&gt; 4-MU-glucoside &gt; DIMBOA-glucoside. No activity with pNP-glucoside, oNP-glucoside and sinigrin as substrates. The polypeptide is Beta-glucosidase 21 (Arabidopsis thaliana (Mouse-ear cress)).